A 350-amino-acid polypeptide reads, in one-letter code: MEMTFRWYGKDDPVKLEYIKQIPGMKGIVTAIYDIPVGEVWPLERILELKKEIESHGLKLSVIESVPVHEDIKLGLPTRDRYIDNYIQTIRNLAEAGVDTICYNFMPVFDWTRSDLNYKLEDGSTCLIYDEEQVKKMDPALGELELPGWDTSYGEGGLKGLLEQYKDIDEEILWSNLNYFIQRIMKVADKVRMKMAIHPDDPPWGIFGLPRIITNFDNLKRFIDLYDSPYHGITLCTGSLGCTKVNDMVQMINYFGKERNRIHFAHLRNVKITGDSSFNEVAHLSEAGSLDFYEIVKAYCDYDFAGPYRPDHGRMIWGETGRPGYGLYDRALGAVYINGLIEAIKKNKKN.

It belongs to the mannonate dehydratase family. Fe(2+) serves as cofactor. Mn(2+) is required as a cofactor.

The enzyme catalyses D-mannonate = 2-dehydro-3-deoxy-D-gluconate + H2O. The protein operates within carbohydrate metabolism; pentose and glucuronate interconversion. Its function is as follows. Catalyzes the dehydration of D-mannonate. This Clostridium perfringens (strain 13 / Type A) protein is Mannonate dehydratase.